A 497-amino-acid polypeptide reads, in one-letter code: Cobyric acid synthase (497 aa).

Positions aspartate 251 to phenylalanine 443 constitute a GATase cobBQ-type domain. Cysteine 333 (nucleophile) is an active-site residue. The active site involves histidine 435.

Belongs to the CobB/CobQ family. CobQ subfamily.

It participates in cofactor biosynthesis; adenosylcobalamin biosynthesis. Its function is as follows. Catalyzes amidations at positions B, D, E, and G on adenosylcobyrinic A,C-diamide. NH(2) groups are provided by glutamine, and one molecule of ATP is hydrogenolyzed for each amidation. This chain is Cobyric acid synthase, found in Carboxydothermus hydrogenoformans (strain ATCC BAA-161 / DSM 6008 / Z-2901).